Reading from the N-terminus, the 108-residue chain is Trp operon repressor homolog (108 aa).

Residues 59 to 82 (QRQISQLLGVGVATITRGSNELKS) mediate DNA binding.

Belongs to the TrpR family. As to quaternary structure, homodimer.

The protein resides in the cytoplasm. Functionally, this protein is an aporepressor. When complexed with L-tryptophan it binds the operator region of the trp operon and prevents the initiation of transcription. The protein is Trp operon repressor homolog of Aliivibrio fischeri (strain MJ11) (Vibrio fischeri).